A 214-amino-acid chain; its full sequence is GTP-binding nuclear protein GSP1/Ran (214 aa).

Residues 4 to 168 (EVPTFKLVLV…LWLARKLAGN (165 aa)) enclose the Small GTPase Ran-type domain. A GTP-binding site is contributed by 15–22 (DGGTGKTT). Residues 34–42 (KKYIATIGV) are switch-I. GTP-binding positions include Gly-65, 119–122 (NKVD), and 147–149 (SAK). The tract at residues 65 to 81 (GQEKFGGLRDGYYINAQ) is switch-II.

Belongs to the small GTPase superfamily. Ran family. In terms of assembly, found in a nuclear export complex with RanGTP, exportin and pre-miRNA.

Its subcellular location is the nucleus. Functionally, GTP-binding protein involved in nucleocytoplasmic transport. Required for the import of protein into the nucleus and also for RNA export. Involved in chromatin condensation and control of cell cycle. The sequence is that of GTP-binding nuclear protein GSP1/Ran (GSP1) from Candida glabrata (strain ATCC 2001 / BCRC 20586 / JCM 3761 / NBRC 0622 / NRRL Y-65 / CBS 138) (Yeast).